An 88-amino-acid polypeptide reads, in one-letter code: KTx type I (88 aa).

An N-terminal signal peptide occupies residues 1-19 (MKTTLVVVVLACIVALTSA). In terms of domain architecture, ShKT spans 54–88 (CKDVLSEFSCGVLKKDGQCNKADIQAKCKLTCDKC). Cystine bridges form between Cys-54-Cys-88, Cys-63-Cys-81, and Cys-72-Cys-85.

It belongs to the sea anemone type 1 potassium channel toxin family. Expressed both outside and in acontia, a specialised envenomation structure laden with batteries of venom-containing nematocysts found only in the superfamily Metridioidea.

It is found in the secreted. The protein resides in the nematocyst. In terms of biological role, inhibits voltage-gated potassium channels (Kv1/KCNA). The sequence is that of KTx type I from Calliactis polypus (Hermit crab anemone).